The sequence spans 373 residues: 3-isopropylmalate dehydrogenase (373 aa).

Residue G82–E93 coordinates NAD(+). Residues R100, R110, R139, and D231 each contribute to the substrate site. Residues D231 and D260 each coordinate Mg(2+). NAD(+) is bound at residue G295–N306.

The protein belongs to the isocitrate and isopropylmalate dehydrogenases family. As to quaternary structure, homodimer. Mg(2+) is required as a cofactor. Mn(2+) serves as cofactor.

Its subcellular location is the cytoplasm. The catalysed reaction is (2R,3S)-3-isopropylmalate + NAD(+) = 4-methyl-2-oxopentanoate + CO2 + NADH. It participates in amino-acid biosynthesis; L-leucine biosynthesis; L-leucine from 3-methyl-2-oxobutanoate: step 3/4. Its function is as follows. Catalyzes the oxidation of 3-carboxy-2-hydroxy-4-methylpentanoate (3-isopropylmalate) to 3-carboxy-4-methyl-2-oxopentanoate. The product decarboxylates to 4-methyl-2 oxopentanoate. The polypeptide is 3-isopropylmalate dehydrogenase (LEU2) (Scheffersomyces stipitis (strain ATCC 58785 / CBS 6054 / NBRC 10063 / NRRL Y-11545) (Yeast)).